Reading from the N-terminus, the 392-residue chain is Putative RNA-binding protein Luc7-like 2 (392 aa).

The residue at position 18 (Ser18) is a Phosphoserine. Residues 102 to 177 (EVSKKRLAET…EAEEVYRNSM (76 aa)) are a coiled coil. Basic and acidic residues predominate over residues 235–257 (KQEKRNQERLKRREEREREEREK). A disordered region spans residues 235–392 (KQEKRNQERL…SSEEREAGEI (158 aa)). The segment covering 258–321 (LRRSRSHSKN…RSRSHQRSRH (64 aa)) has biased composition (basic residues). Lys266 and Lys269 each carry 5-hydroxylysine; by JMJD6. 2 stretches are compositionally biased toward basic and acidic residues: residues 337 to 364 (KERF…DRDR) and 377 to 392 (RSED…AGEI).

It belongs to the Luc7 family. Interacts with SCNM1. In terms of tissue distribution, all isoforms are expressed in brain, kidney, heart, thymus, stomach, skeletal muscle, testis and spinal cord.

Its subcellular location is the nucleus speckle. It is found in the nucleus. It localises to the nucleoplasm. In terms of biological role, may bind to RNA via its Arg/Ser-rich domain. This Mus musculus (Mouse) protein is Putative RNA-binding protein Luc7-like 2 (Luc7l2).